A 155-amino-acid polypeptide reads, in one-letter code: Protein SprT-like (155 aa).

Positions 7 to 145 constitute a SprT-like domain; it reads QRHMEEVSLQ…GSCGGKLIQI (139 aa). Histidine 67 is a Zn(2+) binding site. Residue glutamate 68 is part of the active site. Residue histidine 71 coordinates Zn(2+).

The protein belongs to the SprT family. Zn(2+) is required as a cofactor.

The protein resides in the cytoplasm. The protein is Protein SprT-like of Listeria monocytogenes serotype 4a (strain HCC23).